An 826-amino-acid chain; its full sequence is Homeobox-leucine zipper protein HDG5 (826 aa).

Disordered regions lie at residues 1-34 (MLTM…IQNP) and 69-119 (EMME…HRHT). Over residues 23 to 34 (PSSSSPGTIQNP) the composition is skewed to low complexity. The span at 88 to 105 (EDPKFGNESDVNELHDDE) shows a compositional bias: basic and acidic residues. The segment covering 110–119 (AKKKRYHRHT) has biased composition (basic residues). Residues 111-170 (KKKRYHRHTNRQIQEMEALFKENPHPDDKQRKRLSAELGLKPRQVKFWFQNRRTQMKAQQ) constitute a DNA-binding region (homeobox). Residues 165 to 189 (QMKAQQDRNENVMLRAENDNLKSEN) adopt a coiled-coil conformation. The 245-residue stretch at 314-558 (ADEEKVIAME…LQRQCERIAS (245 aa)) folds into the START domain.

This sequence belongs to the HD-ZIP homeobox family. Class IV subfamily. Expressed in shoot apical meristem (SAM) with higher levels in L1 cells and the epidermal layer of young leaves. Expressed in the L1 of apical inflorescence meristems, early flower primordia, carpel and stamen filament epidermis, ovule primordia, nucellus and chalaze.

The protein resides in the nucleus. Its function is as follows. Probable transcription factor. Involved, together with PDF2, in the regulation of flower organs development by promoting the expression of APETALA 3 (AP3) in the epidermis and internal cell layers of developing flowers. The chain is Homeobox-leucine zipper protein HDG5 from Arabidopsis thaliana (Mouse-ear cress).